Reading from the N-terminus, the 261-residue chain is uncharacterized protein (261 aa).

Positions 7, 9, 96, 132, 156, and 211 each coordinate a divalent metal cation.

This sequence belongs to the metallo-dependent hydrolases superfamily. TatD-type hydrolase family. A divalent metal cation serves as cofactor.

This is an uncharacterized protein from Mycoplasma pneumoniae (strain ATCC 29342 / M129 / Subtype 1) (Mycoplasmoides pneumoniae).